A 117-amino-acid chain; its full sequence is Hainantoxin-XV-4 (117 aa).

A signal peptide spans 1-20 (MKLCAVIIASLLVCVAVASS). Positions 20–55 (SSDNQKEFAQEKEMTREETQSLGEHEKDDEVTGSEE) are disordered. The propeptide occupies 21-56 (SDNQKEFAQEKEMTREETQSLGEHEKDDEVTGSEER). Basic and acidic residues predominate over residues 23-55 (NQKEFAQEKEMTREETQSLGEHEKDDEVTGSEE). 4 disulfides stabilise this stretch: cysteine 58-cysteine 72, cysteine 65-cysteine 78, cysteine 69-cysteine 115, and cysteine 71-cysteine 91.

This sequence belongs to the neurotoxin 03 (Tx2) family. 02 subfamily. HNTX-XV sub-subfamily. As to expression, expressed by the venom gland.

Its subcellular location is the secreted. In terms of biological role, putative ion channel inhibitor. This Cyriopagopus hainanus (Chinese bird spider) protein is Hainantoxin-XV-4.